The sequence spans 246 residues: Pyridoxine 5'-phosphate synthase (246 aa).

3-amino-2-oxopropyl phosphate is bound at residue asparagine 12. A 1-deoxy-D-xylulose 5-phosphate-binding site is contributed by 14–15 (DH). Residue arginine 23 participates in 3-amino-2-oxopropyl phosphate binding. Histidine 48 functions as the Proton acceptor in the catalytic mechanism. Arginine 50 and histidine 55 together coordinate 1-deoxy-D-xylulose 5-phosphate. Glutamate 75 serves as the catalytic Proton acceptor. Residue threonine 105 coordinates 1-deoxy-D-xylulose 5-phosphate. Catalysis depends on histidine 196, which acts as the Proton donor. 3-amino-2-oxopropyl phosphate contacts are provided by residues glycine 197 and 218 to 219 (GH).

Belongs to the PNP synthase family. As to quaternary structure, homooctamer; tetramer of dimers.

Its subcellular location is the cytoplasm. The enzyme catalyses 3-amino-2-oxopropyl phosphate + 1-deoxy-D-xylulose 5-phosphate = pyridoxine 5'-phosphate + phosphate + 2 H2O + H(+). It participates in cofactor biosynthesis; pyridoxine 5'-phosphate biosynthesis; pyridoxine 5'-phosphate from D-erythrose 4-phosphate: step 5/5. In terms of biological role, catalyzes the complicated ring closure reaction between the two acyclic compounds 1-deoxy-D-xylulose-5-phosphate (DXP) and 3-amino-2-oxopropyl phosphate (1-amino-acetone-3-phosphate or AAP) to form pyridoxine 5'-phosphate (PNP) and inorganic phosphate. This chain is Pyridoxine 5'-phosphate synthase, found in Pseudomonas savastanoi pv. phaseolicola (strain 1448A / Race 6) (Pseudomonas syringae pv. phaseolicola (strain 1448A / Race 6)).